Here is a 230-residue protein sequence, read N- to C-terminus: Broad-specificity phosphatase YOR283W (230 aa).

Catalysis depends on H24, which acts as the Tele-phosphohistidine intermediate. Substrate is bound by residues 36-37 and 102-105; these read QG and ERYM. The Proton donor/acceptor role is filled by E102.

The protein belongs to the phosphoglycerate mutase family. BPG-dependent PGAM subfamily.

Its subcellular location is the cytoplasm. It is found in the nucleus. Functionally, metal-independent phosphatase active against a broad range of phosphorylated substrates including nucleoside tri- and diphosphates, phosphorylated organic acids, and amino acids. Shows no activity against phytic acid, phosphorylated carbohydrates, and nucleoside monophosphates. This Saccharomyces cerevisiae (strain ATCC 204508 / S288c) (Baker's yeast) protein is Broad-specificity phosphatase YOR283W.